We begin with the raw amino-acid sequence, 427 residues long: UDP-N-acetyl-D-mannosamine dehydrogenase (427 aa).

The NAD(+) site is built by Tyr-20, Ile-21, Asp-40, Arg-45, Thr-92, and Thr-130. 8 residues coordinate UDP-N-acetyl-alpha-D-mannosaminouronate: Arg-157, Val-158, Lys-209, Asn-213, Arg-216, His-247, Arg-249, and Gly-260. Lys-209 functions as the Proton donor/acceptor in the catalytic mechanism. The Nucleophile role is filled by Cys-263. Positions 317 and 318 each coordinate UDP-N-acetyl-alpha-D-mannosaminouronate. Arg-325 is a binding site for NAD(+). Lys-403 is a UDP-N-acetyl-alpha-D-mannosaminouronate binding site.

The protein belongs to the UDP-glucose/GDP-mannose dehydrogenase family. Homotetramer; probably dimer of dimers.

The enzyme catalyses UDP-N-acetyl-alpha-D-mannosamine + 2 NAD(+) + H2O = UDP-N-acetyl-alpha-D-mannosaminouronate + 2 NADH + 3 H(+). Functionally, catalyzes the four-electron oxidation of UDP-N-acetyl-D-mannosamine (UDP-ManNAc), reducing NAD(+) and releasing UDP-N-acetylmannosaminuronic acid (UDP-ManNAcA). This chain is UDP-N-acetyl-D-mannosamine dehydrogenase (wecC), found in Methanocaldococcus jannaschii (strain ATCC 43067 / DSM 2661 / JAL-1 / JCM 10045 / NBRC 100440) (Methanococcus jannaschii).